The chain runs to 190 residues: MEQDGDQLSARPALETEGLRFLHVTVGSLLATYGWYIVFCCILLYVVFQKLSTRLRALRQRHLDGAAAALEPDVVVKRQEALAAARLKMQEELNAQVEKHKEKLRQLEEEKRRQKIERWDSVQEGRSYRGDARKRQEEDSPGPSTSSVIPKRKSDKKPLRGGGYNPLSGEGGGACSWRPGRRGPSSGGUG.

Residues 28 to 48 (SLLATYGWYIVFCCILLYVVF) form a helical membrane-spanning segment. Residues 78–90 (RQEALAAARLKMQ) are VCP/p97-interacting motif (VIM). Over residues 115–138 (KIERWDSVQEGRSYRGDARKRQEE) the composition is skewed to basic and acidic residues. Residues 115–190 (KIERWDSVQE…RRGPSSGGUG (76 aa)) form a disordered region. Ser-140 carries the post-translational modification Phosphoserine. A compositionally biased stretch (gly residues) spans 160 to 174 (RGGGYNPLSGEGGGA). A non-standard amino acid (selenocysteine) is located at residue Sec-189.

Belongs to the selenoprotein S family. In terms of assembly, interacts with DERL1 and (via VIM motif) with VCP, suggesting that it forms a membrane complex with DERL1 that serves as a receptor for VCP. Also interacts with DERL2, DERL3 and SELENOK. The SELENOK-SELENOS complex interacts with VCP. Truncated SELENOS proteins produced by failed UGA/Sec decoding are ubiquitinated by the CRL2(KLHDC2) and CRL2(KLHDC3) complexes, which recognizes the glycine (Gly) at the C-terminus of truncated SELENOS proteins. Truncated SELENOS proteins produced by failed UGA/Sec decoding are also ubiquitinated by the CRL5(KLHDC1) complex. Ubiquitously expressed. Highest expression in liver and lung, with lower levels detected in spleen, kidney, brain, lymph nodes, small intestine, stomach and heart. Very low expression detected in longissimus dorsi.

Its subcellular location is the cytoplasm. It is found in the endoplasmic reticulum membrane. Its function is as follows. Involved in the degradation process of misfolded endoplasmic reticulum (ER) luminal proteins. Participates in the transfer of misfolded proteins from the ER to the cytosol, where they are destroyed by the proteasome in a ubiquitin-dependent manner. Probably acts by serving as a linker between DERL1, which mediates the retrotranslocation of misfolded proteins into the cytosol, and the ATPase complex VCP, which mediates the translocation and ubiquitination. In Sus scrofa (Pig), this protein is Selenoprotein S.